A 244-amino-acid polypeptide reads, in one-letter code: tRNA (guanine-N(7)-)-methyltransferase (244 aa).

S-adenosyl-L-methionine-binding residues include glutamate 75, glutamate 100, aspartate 127, and aspartate 150. The active site involves aspartate 150. Residues lysine 154, aspartate 186, and 223–226 contribute to the substrate site; that span reads TRFE.

It belongs to the class I-like SAM-binding methyltransferase superfamily. TrmB family.

The enzyme catalyses guanosine(46) in tRNA + S-adenosyl-L-methionine = N(7)-methylguanosine(46) in tRNA + S-adenosyl-L-homocysteine. Its pathway is tRNA modification; N(7)-methylguanine-tRNA biosynthesis. Functionally, catalyzes the formation of N(7)-methylguanine at position 46 (m7G46) in tRNA. In Xylella fastidiosa (strain M23), this protein is tRNA (guanine-N(7)-)-methyltransferase.